Reading from the N-terminus, the 410-residue chain is MGKRKAFIDKKASQSFRLVPDNRERSERFKPTQEHLEEQQKYGVYYDDDYDYLQHMRAVNEPMKLENVHEEVEKTTIKTSGSSAFPPAPPLFGLVGALKKPEFFDEDVANALEEVTDDRNTGELEDNFITLAGGLLDERTTVYRSTRRGEDSEEEEDDDEDDEMYDDYNDDELFGEEAVGEIRVERADQRVIDNAFEELMDREYNTDQIGELDGDDYDVGGALEPNAGRLHKLINDKGPSNAEYDEELAKHYVRERMRLIEEGVIKDKEEYEIVEVDEGTNKKMKWDCESFATQYTNIYNHPTLIKEPRGLSRKALKRFDKAVEEMDIAEEDEDDDEDMEDDDDKESVFSTVSTFRPKNETPEQRSLRKKAVKEARKLRRVEKKANKTMFAEEKRKLAKGRIGQIKARPI.

Disordered regions lie at residues 142–165 (VYRS…DEMY) and 325–378 (EMDI…ARKL). 2 stretches are compositionally biased toward acidic residues: residues 151-165 (DSEE…DEMY) and 325-345 (EMDI…DDDK). Residues 357–366 (PKNETPEQRS) show a composition bias toward basic and acidic residues. Residues 363-389 (EQRSLRKKAVKEARKLRRVEKKANKTM) are a coiled coil. A compositionally biased stretch (basic residues) spans 367-378 (LRKKAVKEARKL).

This sequence belongs to the LTV1 family.

The chain is Protein LTV1 homolog from Caenorhabditis elegans.